Consider the following 488-residue polypeptide: MARLSSLLSFSLALLTFLHGSTAQQFPNECQLDQLNALEPSHVLKAEAGRIEVWDHHAPQLRCSGVSFVRYIIESKGLYLPSFFSTARLSFVAKGEGLMGRVVLCAETFQDSSVFQPSGGSPFGEGQGQGQQGQGQGHQGQGQGQQGQQGQQGQQSQGQGFRDMHQKVEHIRTGDTIATHPGVAQWFYNDGNQPLVIVSVLDLASHQNQLDRNPRPFYLAGNNPQGQVWIEGREQQPQKNILNGFTPEVLAKAFKIDVRTAQQLQNQQDNRGNIIRVQGPFSVIRPPLRSQRPQEEVNGLEETICSARCTDNLDDPSNADVYKPQLGYISTLNSYDLPILRFLRLSALRGSIRQNAMVLPQWNANANAVLYVTDGEAHVQVVNDNGDRVFDGQVSQGQLLSIPQGFSVVKRATSEQFRWIEFKTNANAQINTLAGRTSVLRGLPLEVISNGYQISLEEARRVKFNTIETTLTHSSGPASYGGPRKADA.

The signal sequence occupies residues 1–23 (MARLSSLLSFSLALLTFLHGSTA). 2 cysteine pairs are disulfide-bonded: cysteine 30–cysteine 63 and cysteine 105–cysteine 305. 2 consecutive Cupin type-1 domains span residues 35–262 (LNAL…RTAQ) and 311–460 (DNLD…EEAR). The disordered stretch occupies residues 116–163 (QPSGGSPFGEGQGQGQQGQGQGHQGQGQGQQGQQGQQGQQSQGQGFRD). The span at 121–147 (SPFGEGQGQGQQGQGQGHQGQGQGQQG) shows a compositional bias: gly residues. The span at 148-160 (QQGQQGQQSQGQG) shows a compositional bias: low complexity.

Belongs to the 11S seed storage protein (globulins) family. In terms of assembly, hexamer; each subunit is composed of an acidic and a basic chain derived from a single precursor and linked by a disulfide bond.

The protein resides in the rough endoplasmic reticulum. Functionally, this is a seed storage protein. In Brassica napus (Rape), this protein is Cruciferin (CRUA).